The primary structure comprises 185 residues: ATP-dependent protease subunit HslV (185 aa).

T12 is a catalytic residue. Residues A168, C171, and T174 each contribute to the Na(+) site.

This sequence belongs to the peptidase T1B family. HslV subfamily. In terms of assembly, a double ring-shaped homohexamer of HslV is capped on each side by a ring-shaped HslU homohexamer. The assembly of the HslU/HslV complex is dependent on binding of ATP.

The protein resides in the cytoplasm. It carries out the reaction ATP-dependent cleavage of peptide bonds with broad specificity.. Its activity is regulated as follows. Allosterically activated by HslU binding. Protease subunit of a proteasome-like degradation complex believed to be a general protein degrading machinery. The sequence is that of ATP-dependent protease subunit HslV from Dinoroseobacter shibae (strain DSM 16493 / NCIMB 14021 / DFL 12).